The sequence spans 326 residues: Macrosialin (326 aa).

The first 20 residues, 1–20 (MRLPVCLILLGPLIAQGTEE), serve as a signal peptide directing secretion. The interval 21–109 (DCPHKKAVTL…ATSPRSSTVG (89 aa)) is mucin-like. The Extracellular portion of the chain corresponds to 21–291 (DCPHKKAVTL…PCFSCNRDQS (271 aa)). Positions 38 to 58 (PTATESTASPTTSHRPTTTSH) are enriched in low complexity. The segment at 38–129 (PTATESTASP…SPRSKGALGN (92 aa)) is disordered. 4 consecutive repeat copies span residues 44 to 49 (TASPTT), 50 to 64 (SHRP…VTVH), 65 to 72 (TSSGPTTV), and 73 to 88 (THNP…ATIS). The segment covering 59-69 (GNVTVHTSSGP) has biased composition (polar residues). N-linked (GlcNAc...) asparagine glycosylation occurs at N60. Positions 70 to 80 (TTVTHNPATTT) are enriched in low complexity. A compositionally biased stretch (polar residues) spans 81-108 (SHGNATISHATVSPTTNGTATSPRSSTV). N84 and N97 each carry an N-linked (GlcNAc...) asparagine glycan. Residues 111-120 (HPGPPPPSPS) show a composition bias toward pro residues. N129, N134, N169, N218, N233, and N251 each carry an N-linked (GlcNAc...) asparagine glycan. An intrachain disulfide couples C139 to C177. C249 and C286 are oxidised to a cystine. Residues 292 to 316 (LLLPLIIGLVLLGLLTLVLIAFCIT) traverse the membrane as a helical segment. Topologically, residues 317-326 (RRRQSTYQPL) are cytoplasmic.

Belongs to the LAMP family. In terms of processing, N- and O-glycosylated. Expressed in tissue macrophages and to a lesser extent in dendritic cells.

It is found in the endosome membrane. Its subcellular location is the lysosome membrane. The protein resides in the cell membrane. Could play a role in phagocytic activities of tissue macrophages, both in intracellular lysosomal metabolism and extracellular cell-cell and cell-pathogen interactions. Binds to tissue- and organ-specific lectins or selectins, allowing homing of macrophage subsets to particular sites. Rapid recirculation of CD68 from endosomes and lysosomes to the plasma membrane may allow macrophages to crawl over selectin-bearing substrates or other cells. The sequence is that of Macrosialin (Cd68) from Mus musculus (Mouse).